A 311-amino-acid chain; its full sequence is Tyrosine recombinase XerD (311 aa).

Residues 2–95 (KTLALQLQGY…AVRGLHRFAA (94 aa)) enclose the Core-binding (CB) domain. The region spanning 116–304 (RLPKSLTIDE…TVHALREVWA (189 aa)) is the Tyr recombinase domain. Active-site residues include Arg160, Lys184, His256, Arg259, and His282. Tyr291 (O-(3'-phospho-DNA)-tyrosine intermediate) is an active-site residue.

It belongs to the 'phage' integrase family. XerD subfamily. In terms of assembly, forms a cyclic heterotetrameric complex composed of two molecules of XerC and two molecules of XerD.

Its subcellular location is the cytoplasm. Functionally, site-specific tyrosine recombinase, which acts by catalyzing the cutting and rejoining of the recombining DNA molecules. The XerC-XerD complex is essential to convert dimers of the bacterial chromosome into monomers to permit their segregation at cell division. It also contributes to the segregational stability of plasmids. The chain is Tyrosine recombinase XerD from Mycobacterium tuberculosis (strain CDC 1551 / Oshkosh).